We begin with the raw amino-acid sequence, 150 residues long: CCAAT/enhancer-binding protein gamma (150 aa).

Residue Lys3 forms a Glycyl lysine isopeptide (Lys-Gly) (interchain with G-Cter in SUMO2) linkage. Residues 27-94 (GLQQVPQLVP…QKAQDTLQRV (68 aa)) form a disordered region. Residues 28–37 (LQQVPQLVPA) show a composition bias toward low complexity. A compositionally biased stretch (basic and acidic residues) spans 56–72 (SPMDRNSDEYRQRRERN). In terms of domain architecture, bZIP spans 62-125 (SDEYRQRRER…SVLKDLFLEH (64 aa)). Positions 66–93 (RQRRERNNMAVKKSRLKSKQKAQDTLQR) are basic motif. The segment at 97 to 118 (LKEENERLEAKIKLLTKELSVL) is leucine-zipper. The segment at 129 to 150 (LADNVQPISTETTATNSDNPGQ) is disordered. The span at 134-150 (QPISTETTATNSDNPGQ) shows a compositional bias: polar residues.

This sequence belongs to the bZIP family. C/EBP subfamily. As to quaternary structure, binds DNA as a dimer and can form stable heterodimers with CEBPA. Can form stable heterodimers with CEBPB. Interacts with ZNF638; this interaction increases transcriptional activation. In terms of tissue distribution, ubiquitous.

Its subcellular location is the nucleus. Functionally, transcription factor that binds to the promoter and the enhancer regions of target genes. Binds to the promoter and the enhancer of the immunoglobulin heavy chain. Binds to GPE1, a cis-acting element in the G-CSF gene promoter. Binds to the enhancer element PRE-I (positive regulatory element-I) of the IL-4 gene. Binds to the promoter and the enhancer of the alpha-1-fetoprotein gene. The polypeptide is CCAAT/enhancer-binding protein gamma (Cebpg) (Mus musculus (Mouse)).